The primary structure comprises 632 residues: PTS system mannitol-specific EIICBA component (632 aa).

A PTS EIIC type-2 domain is found at 12–341 (FGRFLSNMIM…ILLKYDFNTI (330 aa)). Transmembrane regions (helical) follow at residues 24 to 45 (ISIFIAWGMMNALFMPLGWQPN), 50 to 70 (QLISPMIFYLLPILIGYTGGS), 134 to 155 (SLAILGILLAIISFFTIGPFIE), 165 to 185 (IQIILSYNLLPLTSIIIEPAK), 273 to 292 (LILGGMSGIFILVLLHGGLI), and 313 to 334 (FSNIISVACSFLVSFISSSILL). Residues 374 to 469 (KTIIVACDAG…KLVENMVFLY (96 aa)) enclose the PTS EIIB type-2 domain. Residue Cys380 is the Phosphocysteine intermediate; for EIIB activity of the active site. Phosphocysteine; by EIIA is present on Cys380. One can recognise a PTS EIIA type-2 domain in the interval 488–630 (FQLNEENIIL…KEALSLLTME (143 aa)). Catalysis depends on His548, which acts as the Tele-phosphohistidine intermediate; for EIIA activity. The residue at position 548 (His548) is a Phosphohistidine; by HPr.

In terms of assembly, homodimer. An intramolecular phosphotransfer takes places between His-548 and Cys-380.

Its subcellular location is the cell inner membrane. The enzyme catalyses D-mannitol(out) + N(pros)-phospho-L-histidyl-[protein] = D-mannitol 1-phosphate(in) + L-histidyl-[protein]. Its function is as follows. The phosphoenolpyruvate-dependent sugar phosphotransferase system (sugar PTS), a major carbohydrate active transport system, catalyzes the phosphorylation of incoming sugar substrates concomitantly with their translocation across the cell membrane. This system is involved in D-mannitol transport. The polypeptide is PTS system mannitol-specific EIICBA component (mtlA) (Buchnera aphidicola subsp. Acyrthosiphon pisum (strain APS) (Acyrthosiphon pisum symbiotic bacterium)).